The chain runs to 338 residues: Nucleoid-associated protein PA14_59050 (338 aa).

The protein belongs to the YejK family.

The protein localises to the cytoplasm. Its subcellular location is the nucleoid. The chain is Nucleoid-associated protein PA14_59050 from Pseudomonas aeruginosa (strain UCBPP-PA14).